We begin with the raw amino-acid sequence, 614 residues long: Sodium- and chloride-dependent betaine transporter (614 aa).

The tract at residues 1 to 33 (MDRKVAVPEDGPPVVSWLPEEGEKLDQEGEDQV) is disordered. Residues 1–44 (MDRKVAVPEDGPPVVSWLPEEGEKLDQEGEDQVKDRGQWTNKME) lie on the Cytoplasmic side of the membrane. Basic and acidic residues predominate over residues 21 to 33 (EGEKLDQEGEDQV). A run of 3 helical transmembrane segments spans residues 45–65 (FVLS…FPYL), 73–92 (AFFI…VFFL), and 117–137 (GIGL…IIIL). Residues 138-210 (AWALFYLFSS…SGIHDLGALR (73 aa)) lie on the Extracellular side of the membrane. The cysteines at positions 157 and 166 are disulfide-linked. Residues N171 and N183 are each glycosylated (N-linked (GlcNAc...) asparagine). 9 helical membrane passes run 211 to 229 (WELA…FCIW), 238 to 255 (VVYF…ILLI), 291 to 308 (IFFS…LGSY), 320 to 341 (IALC…FSIL), 374 to 393 (MPLS…FLGL), 423 to 441 (LLIL…FLVT), 458 to 478 (GICL…VYGA), 499 to 518 (ISWL…FSLS), and 538 to 556 (IGWF…FVII). The Cytoplasmic portion of the chain corresponds to 557–614 (TLLKTRGSFKKRLRQLTTPDPSLPQPKQHLYLDGGTSQDCGPSPTKEGLIVGEKETHL). Positions 591–614 (GTSQDCGPSPTKEGLIVGEKETHL) are disordered.

This sequence belongs to the sodium:neurotransmitter symporter (SNF) (TC 2.A.22) family. SLC6A12 subfamily. Interacts with LIN7C. As to expression, kidney.

Its subcellular location is the basolateral cell membrane. It localises to the cell membrane. The catalysed reaction is 4-aminobutanoate(out) + chloride(out) + 3 Na(+)(out) = 4-aminobutanoate(in) + chloride(in) + 3 Na(+)(in). It carries out the reaction glycine betaine(out) + 2 chloride(out) + 3 Na(+)(out) = glycine betaine(in) + 2 chloride(in) + 3 Na(+)(in). Functionally, transporter that mediates cellular uptake of betaine and GABA in a sodium- and chloride-dependent process. May have a role in regulation of GABAergic transmission in the brain through the reuptake of GABA into presynaptic terminals, as well as in osmotic regulation. Probably also involved in renal and hepatic osmotic regulation. The polypeptide is Sodium- and chloride-dependent betaine transporter (SLC6A12) (Canis lupus familiaris (Dog)).